The following is a 356-amino-acid chain: Glutamate 5-kinase (356 aa).

Lysine 6 is an ATP binding site. Substrate contacts are provided by serine 46, aspartate 135, and asparagine 147. 202 to 208 (TGGMRSK) is an ATP binding site. The PUA domain maps to 265–342 (KGIIVVDRGA…SEVRKLLNTT (78 aa)).

The protein belongs to the glutamate 5-kinase family.

The protein localises to the cytoplasm. The catalysed reaction is L-glutamate + ATP = L-glutamyl 5-phosphate + ADP. Its pathway is amino-acid biosynthesis; L-proline biosynthesis; L-glutamate 5-semialdehyde from L-glutamate: step 1/2. Its function is as follows. Catalyzes the transfer of a phosphate group to glutamate to form L-glutamate 5-phosphate. The protein is Glutamate 5-kinase of Aquifex aeolicus (strain VF5).